The primary structure comprises 446 residues: Glutamate--tRNA ligase (446 aa).

The short motif at 9 to 19 is the 'HIGH' region element; the sequence is PSPTGLLHVGN. The short motif at 240-244 is the 'KMSKS' region element; the sequence is GLSKR. ATP is bound at residue Lys243.

This sequence belongs to the class-I aminoacyl-tRNA synthetase family. Glutamate--tRNA ligase type 1 subfamily. As to quaternary structure, monomer.

It localises to the cytoplasm. It catalyses the reaction tRNA(Glu) + L-glutamate + ATP = L-glutamyl-tRNA(Glu) + AMP + diphosphate. Its function is as follows. Catalyzes the attachment of glutamate to tRNA(Glu) in a two-step reaction: glutamate is first activated by ATP to form Glu-AMP and then transferred to the acceptor end of tRNA(Glu). The protein is Glutamate--tRNA ligase of Azospirillum brasilense.